We begin with the raw amino-acid sequence, 358 residues long: Nuclear receptor subfamily 1 group I member 3 (358 aa).

Residues 18-93 (PRNCVVCGDR…VGMRKDMILS (76 aa)) constitute a DNA-binding region (nuclear receptor). The NR C4-type zinc finger occupies 21 to 41 (CVVCGDRATGYHFHALTCEGC). The residue at position 48 (T48) is a Phosphothreonine; by PKC. The segment at 57 to 81 (CPFAGRCEVSKAQRRHCPACRLQKC) adopts an NR C4-type zinc-finger fold. The NR LBD domain maps to 119–358 (QQKELVQILL…MTPLLGEICS (240 aa)).

Belongs to the nuclear hormone receptor family. NR1 subfamily. As to quaternary structure, heterodimer of NR1I3 and RXR. Interacts with PSMC4. Interacts with ECT2. Directly interacts with DNAJC7; this complex may also include HSP90. Interacts with CRY1. Interacts with CRY2 in a ligand-dependent manner. Post-translationally, phosphorylated at Thr-48 by PKC, dephosphorylation of Thr-48 is required for nuclear translocation and activation. In terms of tissue distribution, predominantly expressed in liver.

The protein localises to the nucleus. The protein resides in the cytoplasm. Its subcellular location is the cytoskeleton. Functionally, binds and transactivates the retinoic acid response elements that control expression of the retinoic acid receptor beta 2 and alcohol dehydrogenase 3 genes. Transactivates both the phenobarbital responsive element module of the human CYP2B6 gene and the CYP3A4 xenobiotic response element. This Mus musculus (Mouse) protein is Nuclear receptor subfamily 1 group I member 3 (Nr1i3).